A 316-amino-acid chain; its full sequence is Mycothiol acetyltransferase (316 aa).

N-acetyltransferase domains lie at 16-153 and 156-316; these read REVR…VPAV and VRIR…PAAN. Residue E36 coordinates 1D-myo-inositol 2-(L-cysteinylamino)-2-deoxy-alpha-D-glucopyranoside. Residues 83-85 and 91-96 contribute to the acetyl-CoA site; these read LVV and RRGIGS. Residues E183, K228, and E238 each contribute to the 1D-myo-inositol 2-(L-cysteinylamino)-2-deoxy-alpha-D-glucopyranoside site. Acetyl-CoA contacts are provided by residues 242 to 244 and 249 to 255; these read VGV and QGRGLGQ. Y283 lines the 1D-myo-inositol 2-(L-cysteinylamino)-2-deoxy-alpha-D-glucopyranoside pocket. 288–293 lines the acetyl-CoA pocket; that stretch reads NVAAVR.

It belongs to the acetyltransferase family. MshD subfamily. In terms of assembly, monomer.

It carries out the reaction 1D-myo-inositol 2-(L-cysteinylamino)-2-deoxy-alpha-D-glucopyranoside + acetyl-CoA = mycothiol + CoA + H(+). Functionally, catalyzes the transfer of acetyl from acetyl-CoA to desacetylmycothiol (Cys-GlcN-Ins) to form mycothiol. This is Mycothiol acetyltransferase from Mycolicibacterium paratuberculosis (strain ATCC BAA-968 / K-10) (Mycobacterium paratuberculosis).